The following is a 97-amino-acid chain: Putative septation protein SpoVG (97 aa).

Belongs to the SpoVG family.

Functionally, could be involved in septation. This is Putative septation protein SpoVG from Borrelia garinii subsp. bavariensis (strain ATCC BAA-2496 / DSM 23469 / PBi) (Borreliella bavariensis).